A 1017-amino-acid polypeptide reads, in one-letter code: Fanconi-associated nuclease 1 (1017 aa).

The span at 1–10 (MMSEGKPPDK) shows a compositional bias: basic and acidic residues. A disordered region spans residues 1-23 (MMSEGKPPDKKRPRRSLSISKNK). Positions 11–23 (KRPRRSLSISKNK) are enriched in basic residues. Residues 14 to 22 (RRSLSISKN) carry the D-box motif. The UBZ4-type zinc-finger motif lies at 41 to 69 (KLACPVCSKMVPRYDLNRHLDEMCANNDF). Zn(2+) contacts are provided by cysteine 44, cysteine 47, histidine 59, and cysteine 64. Disordered stretches follow at residues 95–121 (EDVT…KREV) and 170–189 (IDKD…STVV). Residues 179–189 (SSPQSSKSTVV) are compositionally biased toward polar residues. A Phosphoserine modification is found at serine 180. The short motif at 212-214 (KEN) is the KEN box element. Residues 671–696 (SRFVEILQRLHMYEEAVRELESLLSQ) adopt a coiled-coil conformation. Mn(2+) contacts are provided by glutamate 834, aspartate 960, glutamate 975, and valine 976. Residues 895–1007 (EESLRAWVAA…GAEVEVCHVV (113 aa)) enclose the VRR-NUC domain.

This sequence belongs to the FAN1 family. In terms of assembly, interacts with FANCD2 (when monoubiquitinated). Interacts with FANCI, MLH1, MLH3 and PMS2. It depends on Mn(2+) as a cofactor. Mg(2+) is required as a cofactor. Post-translationally, ubiquitinated and degraded during mitotic exit by the APC/C-Cdh1 complex.

The protein localises to the nucleus. The enzyme catalyses Hydrolytically removes 5'-nucleotides successively from the 3'-hydroxy termini of 3'-hydroxy-terminated oligonucleotides.. Its function is as follows. Nuclease required for the repair of DNA interstrand cross-links (ICL) recruited at sites of DNA damage by monoubiquitinated FANCD2. Specifically involved in repair of ICL-induced DNA breaks by being required for efficient homologous recombination, probably in the resolution of homologous recombination intermediates. Not involved in DNA double-strand breaks resection. Acts as a 5'-3' exonuclease that anchors at a cut end of DNA and cleaves DNA successively at every third nucleotide, allowing to excise an ICL from one strand through flanking incisions. Probably keeps excising with 3'-flap annealing until it reaches and unhooks the ICL. Acts at sites that have a 5'-terminal phosphate anchor at a nick or a 1- or 2-nucleotide flap and is augmented by a 3' flap. Also has endonuclease activity toward 5'-flaps. This is Fanconi-associated nuclease 1 from Homo sapiens (Human).